Here is a 658-residue protein sequence, read N- to C-terminus: MVLFYRAHWRDYKNDQVRIMMNLTTLTHRDALCLNARFTSREEAIHALTQRLAALGKISSTEQFLEEVYRRESLGPTALGEGLAVPHGKTAAVKEAAFAVATLSEPLQWEGVDGPEAVDLVVLLAIPPNEAGTTHMQLLTALTTRLADDEIRARIQSATTPDELLSALDDKGGTQPSASFSNAPTIVCVTACPAGIAHTYMAAEYLEKAGRKLGVNVYVEKQGANGIEGRLTADQLNSATACIFAAEVAIKESERFNGIPALSVPVAEPIRHAEALIQQALTLKRSDETRTVQQDTQPVKSVKTELKQALLSGISFAVPLIVAGGTVLAVAVLLSQIFGLQDLFNEENSWLWMYRKLGGGLLGILMVPVLAAYTAYSLADKPALAPGFAAGLAANMIGSGFLGAVVGGLIAGYLMRWVKNHLRLSSKFNGFLTFYLYPVLGTLGAGSLMLFVVGEPVAWINNSLTAWLNGLSGSNALLLGAILGFMCSFDLGGPVNKAAYAFCLGAMANGVYGPYAIFASVKMVSAFTVTASTMLAPRLFKEFEIETGKSTWLLGLAGITEGAIPMAIEDPLRVIGSFVLGSMVTGAIVGAMNIGLSTPGAGIFSLFLLHDNGAGGVMAAIGWFGAALVGAAISTAILLMWRRHAVKHGNYLTDGVMP.

Residues 1–313 (MVLFYRAHWR…TELKQALLSG (313 aa)) lie on the Periplasmic side of the membrane. Residues 25–171 (TLTHRDALCL…DELLSALDDK (147 aa)) form the PTS EIIA type-2 domain. Residue H87 is the Tele-phosphohistidine intermediate; for EIIA activity of the active site. H87 bears the Phosphohistidine; by HPr mark. Residues 186–282 (IVCVTACPAG…AEALIQQALT (97 aa)) enclose the PTS EIIB type-2 domain. C192 (phosphocysteine intermediate; for EIIB activity) is an active-site residue. C192 carries the post-translational modification Phosphocysteine; by EIIA. The region spanning 306–641 (LKQALLSGIS…AISTAILLMW (336 aa)) is the PTS EIIC type-2 domain. The chain crosses the membrane as a helical span at residues 314-334 (ISFAVPLIVAGGTVLAVAVLL). The Cytoplasmic portion of the chain corresponds to 335–358 (SQIFGLQDLFNEENSWLWMYRKLG). Residues 359 to 379 (GGLLGILMVPVLAAYTAYSLA) traverse the membrane as a helical segment. At 380-389 (DKPALAPGFA) the chain is on the periplasmic side. A helical membrane pass occupies residues 390-410 (AGLAANMIGSGFLGAVVGGLI). The Cytoplasmic portion of the chain corresponds to 411 to 433 (AGYLMRWVKNHLRLSSKFNGFLT). The helical transmembrane segment at 434-454 (FYLYPVLGTLGAGSLMLFVVG) threads the bilayer. The Periplasmic segment spans residues 455-474 (EPVAWINNSLTAWLNGLSGS). The chain crosses the membrane as a helical span at residues 475–495 (NALLLGAILGFMCSFDLGGPV). At 496-500 (NKAAY) the chain is on the cytoplasmic side. A helical transmembrane segment spans residues 501–521 (AFCLGAMANGVYGPYAIFASV). Residues 522–551 (KMVSAFTVTASTMLAPRLFKEFEIETGKST) lie on the Periplasmic side of the membrane. A helical membrane pass occupies residues 552-572 (WLLGLAGITEGAIPMAIEDPL). A topological domain (cytoplasmic) is located at residue R573. The chain crosses the membrane as a helical span at residues 574–594 (VIGSFVLGSMVTGAIVGAMNI). The Periplasmic segment spans residues 595-620 (GLSTPGAGIFSLFLLHDNGAGGVMAA). Residues 621-641 (IGWFGAALVGAAISTAILLMW) form a helical membrane-spanning segment. Over 642-658 (RRHAVKHGNYLTDGVMP) the chain is Cytoplasmic.

Its subcellular location is the cell inner membrane. It catalyses the reaction (2R)-2-O-(alpha-D-mannosyl)-glycerate(out) + N(pros)-phospho-L-histidyl-[protein] = (2R)-2-O-(6-phospho-alpha-D-mannosyl)-glycerate(in) + L-histidyl-[protein]. Functionally, the phosphoenolpyruvate-dependent sugar phosphotransferase system (sugar PTS), a major carbohydrate active transport system, catalyzes the phosphorylation of incoming sugar substrates concomitantly with their translocation across the cell membrane. This system is involved in mannosyl-D-glycerate transport. Also involved in thermoinduction of ompC. This Escherichia coli (strain K12) protein is PTS system 2-O-alpha-mannosyl-D-glycerate-specific EIIABC component.